A 491-amino-acid chain; its full sequence is Probable G-protein coupled receptor Mth-like 7 (491 aa).

An N-terminal signal peptide occupies residues 1 to 22 (MRLPWVIFCTVLLLIFTNNSNA). 2 N-linked (GlcNAc...) asparagine glycosylation sites follow: N18 and N42. Topologically, residues 23 to 167 (DIPGCNYYDT…EEVSIQIFNK (145 aa)) are extracellular. Intrachain disulfides connect C27–C80, C82–C87, and C92–C103. The chain crosses the membrane as a helical span at residues 168–188 (CGLIVWFQDGKFWVTVDLFME). Residues 189–222 (KQDYCLYRHNFDSDFPKSMWIIRHRCTSHISPGS) are Cytoplasmic-facing. The helical transmembrane segment at 223–243 (LEILIITMICFVLTIAVYLYI) threads the bilayer. Topologically, residues 244–252 (KKLRNVTGK) are extracellular. N248 carries an N-linked (GlcNAc...) asparagine glycan. The helical transmembrane segment at 253–273 (CIVCCIVSRFIQCLIMILDHL) threads the bilayer. Residues 274 to 325 (NLLNGICSPAGYSSHFFRMASNLWLSVISYHTWKVLTSLNRVDPNYRFLRYN) lie on the Cytoplasmic side of the membrane. Residues 326-346 (AFVWSTAAIMTGSIYIVNQIW) traverse the membrane as a helical segment. Residues 347 to 372 (ENDPSKWNWLPLVGFIRCSVKDWHPS) lie on the Extracellular side of the membrane. The helical transmembrane segment at 373 to 393 (VWIYISGPSLALSTFNVAMFA) threads the bilayer. The Cytoplasmic portion of the chain corresponds to 394–434 (LTAIYIRKVKGGINKFTNEEEGRINCINFDSQTYLQFLRLS). Residues 435–455 (IVMGLTWIFNVIPYSARLHIF) form a helical membrane-spanning segment. At 456–458 (WEW) the chain is on the extracellular side. Residues 459–479 (VGIISEYFHSAFGIVLFVLLV) form a helical membrane-spanning segment. Topologically, residues 480 to 491 (LKRSTWTLMMDS) are cytoplasmic.

This sequence belongs to the G-protein coupled receptor 2 family. Mth subfamily.

Its subcellular location is the cell membrane. The chain is Probable G-protein coupled receptor Mth-like 7 (mthl7) from Drosophila melanogaster (Fruit fly).